The primary structure comprises 346 residues: Fe(3+) ions import ATP-binding protein FbpC 3 (346 aa).

The ABC transporter domain maps to 5-235; that stretch reads LEVDGVDKSF…PIDVATAEFI (231 aa). Position 37–44 (37–44) interacts with ATP; it reads GPSGCGKT.

The protein belongs to the ABC transporter superfamily. Fe(3+) ion importer (TC 3.A.1.10) family. In terms of assembly, the complex is composed of two ATP-binding proteins (FbpC), two transmembrane proteins (FbpB) and a solute-binding protein (FbpA).

Its subcellular location is the cell membrane. It carries out the reaction Fe(3+)(out) + ATP + H2O = Fe(3+)(in) + ADP + phosphate + H(+). Part of the ABC transporter complex FbpABC involved in Fe(3+) ions import. Responsible for energy coupling to the transport system. This is Fe(3+) ions import ATP-binding protein FbpC 3 from Rhodococcus jostii (strain RHA1).